The primary structure comprises 245 residues: Uroporphyrinogen-III C-methyltransferase (245 aa).

Residues proline 12, 87 to 89 (GGD), 117 to 118 (TA), methionine 168, alanine 197, and alanine 225 each bind S-adenosyl-L-homocysteine.

This sequence belongs to the precorrin methyltransferase family.

It catalyses the reaction uroporphyrinogen III + 2 S-adenosyl-L-methionine = precorrin-2 + 2 S-adenosyl-L-homocysteine + H(+). The protein operates within cofactor biosynthesis; adenosylcobalamin biosynthesis; precorrin-2 from uroporphyrinogen III: step 1/1. Its pathway is porphyrin-containing compound metabolism; siroheme biosynthesis; precorrin-2 from uroporphyrinogen III: step 1/1. Catalyzes the two successive C-2 and C-7 methylation reactions involved in the conversion of uroporphyrinogen III to precorrin-2 via the intermediate formation of precorrin-1. It is a step in the biosynthesis of both cobalamin (vitamin B12) and siroheme. The chain is Uroporphyrinogen-III C-methyltransferase (cobA) from Pseudomonas aeruginosa (strain ATCC 15692 / DSM 22644 / CIP 104116 / JCM 14847 / LMG 12228 / 1C / PRS 101 / PAO1).